Consider the following 169-residue polypeptide: MASQSSKPQSIYDFTVKDAKGNDVDLSIYKGKVLIIVNVASQCGLTNSNYTDLTEIYKKYKDQGLEILAFPCNQFGGQEPGSIEEIQNMVCTRFKAEYPIFDKVDVNGDNAAPLYKFLKSSKGGFFGDSIKWNFSKFLVDKEGNVVDRYSPTTTPASMEKDIKKLLGVA.

Cys-43 is a catalytic residue.

Belongs to the glutathione peroxidase family. As to expression, germinating seed, apex, flower, as well as in stressed tissues.

It is found in the cytoplasm. It carries out the reaction a hydroperoxy polyunsaturated fatty acid + 2 glutathione = a hydroxy polyunsaturated fatty acid + glutathione disulfide + H2O. In terms of biological role, protects cells and enzymes from oxidative damage, by catalyzing the reduction of hydrogen peroxide, lipid peroxides and organic hydroperoxide, by glutathione. The polypeptide is Probable phospholipid hydroperoxide glutathione peroxidase (Nicotiana sylvestris (Wood tobacco)).